Here is a 451-residue protein sequence, read N- to C-terminus: Tapasin-related protein (451 aa).

A signal peptide spans 1–20; it reads MGLEPSWYLLLCLAVSGAAG. At 21-412 the chain is on the lumenal side; that stretch reads TDPPTAPTTA…RVLPNPEQRG (392 aa). In terms of domain architecture, Ig-like V-type spans 196–301; that stretch reads FQVTSETQTL…TSLYQAQQIM (106 aa). 2 disulfides stabilise this stretch: C217-C288 and C326-C387. N-linked (GlcNAc...) asparagine glycans are attached at residues N270 and N277. The Ig-like C1-type domain occupies 302–399; it reads PLNILAPPKI…AHVSLEEPLT (98 aa). Residues 413–433 form a helical membrane-spanning segment; the sequence is TLGVIFASIIFLSALLLFLGL. At 434 to 451 the chain is on the cytoplasmic side; it reads HRQQASSSRSTRPMRHSG.

Interacts with peptide-free HLA-A*02-B2M complexes or those loaded with low affinity peptides, likely facilitating peptide exchange onto higher affinity peptides. Interacts with MR1 in a ligand-independent way; this interaction may stabilize MR1 pool and facilitate ligand loading and dissociation. As to expression, widely expressed.

It is found in the cell membrane. It localises to the endoplasmic reticulum membrane. Its subcellular location is the microsome membrane. The protein resides in the golgi apparatus membrane. Functionally, component of the antigen processing and presentation pathway, which binds to MHC class I coupled with beta2-microglobulin/B2M. Association between TAPBPR and MHC class I occurs in the absence of a functional peptide-loading complex (PLC). Expression seems to slow down and down-regulate MHC class I surface expression. The sequence is that of Tapasin-related protein (Tapbpl) from Mus musculus (Mouse).